A 145-amino-acid chain; its full sequence is D-aminoacyl-tRNA deacylase (145 aa).

A Gly-cisPro motif, important for rejection of L-amino acids motif is present at residues 137–138; sequence GP.

It belongs to the DTD family. As to quaternary structure, homodimer.

Its subcellular location is the cytoplasm. The enzyme catalyses glycyl-tRNA(Ala) + H2O = tRNA(Ala) + glycine + H(+). It catalyses the reaction a D-aminoacyl-tRNA + H2O = a tRNA + a D-alpha-amino acid + H(+). An aminoacyl-tRNA editing enzyme that deacylates mischarged D-aminoacyl-tRNAs. Also deacylates mischarged glycyl-tRNA(Ala), protecting cells against glycine mischarging by AlaRS. Acts via tRNA-based rather than protein-based catalysis; rejects L-amino acids rather than detecting D-amino acids in the active site. By recycling D-aminoacyl-tRNA to D-amino acids and free tRNA molecules, this enzyme counteracts the toxicity associated with the formation of D-aminoacyl-tRNA entities in vivo and helps enforce protein L-homochirality. The sequence is that of D-aminoacyl-tRNA deacylase from Serratia proteamaculans (strain 568).